A 554-amino-acid chain; its full sequence is Laccase-8 (554 aa).

The first 21 residues, 1 to 21 (MASAAMLVPLVLVLCTAAASA), serve as a signal peptide directing secretion. Plastocyanin-like domains lie at 29–145 (KVGG…PRNG) and 156–309 (EEIP…YKGV). Cu cation-binding residues include histidine 79 and histidine 81. N-linked (GlcNAc...) asparagine glycans are attached at residues asparagine 107 and asparagine 113. Cu cation is bound by residues histidine 124 and histidine 126. 2 N-linked (GlcNAc...) asparagine glycosylation sites follow: asparagine 271 and asparagine 369. Residues 411 to 537 (DFPDFPPPMQ…AMVFEVLNGP (127 aa)) enclose the Plastocyanin-like 3 domain. Histidine 455, histidine 458, histidine 460, histidine 516, cysteine 517, histidine 518, and histidine 522 together coordinate Cu cation.

Belongs to the multicopper oxidase family. Requires Cu cation as cofactor.

The protein localises to the secreted. It is found in the extracellular space. It localises to the apoplast. The enzyme catalyses 4 hydroquinone + O2 = 4 benzosemiquinone + 2 H2O. Lignin degradation and detoxification of lignin-derived products. This Oryza sativa subsp. japonica (Rice) protein is Laccase-8 (LAC8).